A 483-amino-acid chain; its full sequence is MAQADIALIGLAVMGQNLILNMNDHGFVVCAFNRTVSKVDDFLANEAKGTKVVGAQSLKDMVSKLKKPRRVILLVKAGQAVDDFIEKLVPLLDTGDIIIDGGNSEYRDTTRRCRDLKAKGILFVGSGVSGGEEGARYGPSLMPGGNKEAWPHIKAIFQAIAAKVGTGEPCCDWVGDEGAGHFVKMVHNGIEYGDMQLICEAYHLMKDVLGMRHEEMAQAFEEWNKTELDSFLIEITANILKYRDTDGKELLPKIRDSAGQKGTGKWTAISALEYGMPVTLIGEAVFARCLSSLKEERVQASQKLKGPKVVQLEGSKKSFLEDIRKALYASKIISYAQGFMLLRQAATEFGWTLNYGGIALMWRGGCIIRSVFLGKIKDAFERNPELQNLLLDDFFKSAVDNCQDSWRRVISTGVQAGIPMPCFTTALSFYDGYRHEMLPANLIQAQRDYFGAHTYELLTKPGEFIHTNWTGHGGSVSSSSYNA.

Residues 10-15 (GLAVMG) and 33-35 (NRT) each bind NADP(+). Lysine 38 is modified (N6-acetyllysine). At serine 57 the chain carries Phosphoserine. Lysine 59 carries the post-translational modification N6-acetyllysine. Residues 75 to 77 (VKA) and asparagine 103 contribute to the NADP(+) site. Residues asparagine 103 and 129–131 (SGG) contribute to the substrate site. Residue serine 129 is modified to Phosphoserine. The active-site Proton acceptor is lysine 184. 187-188 (HN) is a binding site for substrate. Residue glutamate 191 is the Proton donor of the active site. Substrate contacts are provided by tyrosine 192, lysine 261, arginine 288, arginine 447, and histidine 453. An NADP(+)-binding site is contributed by 478 to 481 (SSSY).

Belongs to the 6-phosphogluconate dehydrogenase family. As to quaternary structure, homodimer.

Its subcellular location is the cytoplasm. It carries out the reaction 6-phospho-D-gluconate + NADP(+) = D-ribulose 5-phosphate + CO2 + NADPH. It participates in carbohydrate degradation; pentose phosphate pathway; D-ribulose 5-phosphate from D-glucose 6-phosphate (oxidative stage): step 3/3. Functionally, catalyzes the oxidative decarboxylation of 6-phosphogluconate to ribulose 5-phosphate and CO(2), with concomitant reduction of NADP to NADPH. This is 6-phosphogluconate dehydrogenase, decarboxylating (Pgd) from Mus musculus (Mouse).